Reading from the N-terminus, the 2896-residue chain is Protein PRRC2C (2896 aa).

Lys27 carries the N6-acetyllysine modification. The interval 28-212 (GKSLETQKTT…STAGTSEQND (185 aa)) is disordered. Positions 88 to 97 (QEQHEEEKTP) are enriched in basic and acidic residues. A compositionally biased stretch (low complexity) spans 105–119 (KPGVAAPPEVAPAPK). A compositionally biased stretch (polar residues) spans 134–144 (QVNSQFQQEFP). Residues 151-160 (DQEKKEKETN) are compositionally biased toward basic and acidic residues. Phosphoserine is present on residues Ser187 and Ser191. The segment covering 201 to 211 (DESTAGTSEQN) has biased composition (polar residues). Arg242 is modified (asymmetric dimethylarginine; alternate). Arg242 is subject to Omega-N-methylarginine; alternate. 2 positions are modified to asymmetric dimethylarginine: Arg255 and Arg266. Disordered regions lie at residues 264–729 (PMRF…QHLA) and 750–788 (SGRPAMDIPPIHPGMIPPKPLMRRDQMEGSPNSSESFEH). An omega-N-methylarginine mark is found at Arg279 and Arg281. Residues 301-310 (ELKELDKFDN) show a composition bias toward basic and acidic residues. Position 335 is a phosphoserine (Ser335). Positions 341-358 (GSNSPKENNSEDQGSKAS) are enriched in polar residues. Positions 359–368 (ENNENKKETD) are enriched in basic and acidic residues. The segment covering 370–381 (VSNTKSSSQIPA) has biased composition (polar residues). At Lys392 the chain carries N6-acetyllysine. A phosphoserine mark is found at Ser395 and Ser500. A compositionally biased stretch (polar residues) spans 395–405 (SFNQERGTSSH). Positions 465–648 (RREEEERRME…EATPVVHETE (184 aa)) are enriched in basic and acidic residues. Residues 676-708 (QRQQEQMKQQQWQQQQQQGVLPQTVPSQPSSST) show a composition bias toward low complexity. Residues 759-769 (PIHPGMIPPKP) show a composition bias toward pro residues. Residues Ser779, Ser785, and Ser801 each carry the phosphoserine modification. A disordered region spans residues 804-1118 (RMLWGSDPYP…PVSTVQVEPA (315 aa)). Composition is skewed to basic and acidic residues over residues 825–836 (ATEEPEDVRSEA), 852–867 (NQLEAHPKADFIRESS), and 878–888 (SVEDVRPHHTD). Ser867, Ser878, Ser920, and Ser929 each carry phosphoserine. 3 stretches are compositionally biased toward basic and acidic residues: residues 954–993 (IDSKEPIERPEEKPKKEGFIRSSEGPKPEKVYKSKSETRW), 1000–1010 (NRREEVNDRPV), and 1020–1058 (VLRDMKEEREQRKEKEGEKAEKVTEKVVVKPEKTEKKDL). Residues 1020-1046 (VLRDMKEEREQRKEKEGEKAEKVTEKV) are a coiled coil. The segment covering 1059–1081 (PPPPPPPQPPAPIQPQSVPPPIQ) has biased composition (pro residues). The segment covering 1089–1100 (STETATLAQKPS) has biased composition (polar residues). A Glycyl lysine isopeptide (Lys-Gly) (interchain with G-Cter in SUMO2) cross-link involves residue Lys1133. 4 stretches are compositionally biased toward basic and acidic residues: residues 1143-1163 (SKDLVIERPRPDSRPAVKKES), 1170-1180 (YWKEARERDWF), 1214-1230 (HTRDYPQYRDNKPRAEH), and 1237-1248 (RQREESETRSES). 8 disordered regions span residues 1143-1647 (SKDL…DALS), 1670-1785 (EDPQ…SAPV), 1905-1991 (APAS…TAEL), 2005-2164 (ISKK…VSEM), 2218-2238 (LPNTLPLPKRETIQQSSSLTS), 2257-2290 (WENSPNVREKGSPVTSTAPPIATGVSSSASGPST), 2317-2341 (GAGTYTTSSLSTKSTTTSDPPNICK), and 2668-2701 (DIKPGTPPIAGRSTTPTSSPFRATSTSPNSQSSK). Phosphoserine occurs at positions 1242, 1246, 1248, 1249, and 1263. Composition is skewed to basic and acidic residues over residues 1261 to 1297 (RGSETDTDSEIHESASDKDSLSKGKLPKREERPENKK), 1305 to 1330 (FKPDNHVRIDNRLLEKPYVRDDDKAK), 1381 to 1418 (EVPKPEDGEPPRRHEQFIPIAADKRPPKFERKFDPARE), and 1429 to 1446 (PRQDKPPRFRRLREREAA). Residues Thr1265 and Thr1267 each carry the phosphothreonine modification. Polar residues-rich tracts occupy residues 1457 to 1469 (TNGTVNNVAQEPV) and 1477 to 1491 (GNKTPDLSNQNSSDQ). Residues 1505–1517 (FNERRERDEKKNA) show a composition bias toward basic and acidic residues. A Phosphoserine modification is found at Ser1544. Composition is skewed to basic and acidic residues over residues 1620-1634 (NSKDSTGKKREDPKP) and 1692-1704 (RLQDEERRKKEEQ). Residues 1682-1717 (TEVVSKKQQKRLQDEERRKKEEQVIQVWNKKNANEK) are a coiled coil. Over residues 1742-1785 (SSASVPPLASAPLPPSTSASVPASTSAPLPATLTPVPASTSAPV) the composition is skewed to low complexity. Residues 1913-1929 (APAPTPVSAPNPAPPAP) show a composition bias toward pro residues. Low complexity predominate over residues 1943 to 1952 (PLQTTSQSSK). Thr1965 carries the post-translational modification Phosphothreonine. Polar residues predominate over residues 1976 to 1986 (KSIQTPQSHGT). Phosphoserine is present on residues Ser1983 and Ser2013. Residues 2019-2035 (SVSAWNKPLTSFGSAPS) are compositionally biased toward polar residues. Over residues 2075-2088 (KSADKIPEPKEQRQ) the composition is skewed to basic and acidic residues. Ser2105 is subject to Phosphoserine. Positions 2108–2132 (ENKEHKPGPIGKERSLKNRKVKDAQ) are enriched in basic and acidic residues. The residue at position 2143 (Ser2143) is a Phosphoserine. The span at 2257-2267 (WENSPNVREKG) shows a compositional bias: basic and acidic residues. Ser2260 bears the Phosphoserine mark. Polar residues predominate over residues 2269-2290 (PVTSTAPPIATGVSSSASGPST). Over residues 2320–2334 (TYTTSSLSTKSTTTS) the composition is skewed to low complexity. 2 positions are modified to phosphothreonine: Thr2673 and Thr2682. Over residues 2679–2701 (RSTTPTSSPFRATSTSPNSQSSK) the composition is skewed to polar residues. Residues Ser2686 and Ser2694 each carry the phosphoserine modification. An Omega-N-methylarginine modification is found at Arg2814. At Arg2823 the chain carries Asymmetric dimethylarginine; alternate. Omega-N-methylarginine; alternate is present on Arg2823. Residues 2824–2833 (FFSEQQQSKQ) show a composition bias toward polar residues. The tract at residues 2824-2896 (FFSEQQQSKQ…QAIKTEETKS (73 aa)) is disordered.

As to expression, overexpressed in bladder cancer.

The protein localises to the cytoplasm. Its subcellular location is the stress granule. Functionally, required for efficient formation of stress granules. This chain is Protein PRRC2C, found in Homo sapiens (Human).